Consider the following 134-residue polypeptide: 6,7-dimethyl-8-ribityllumazine synthase (134 aa).

Residues Phe-12, 44 to 46 (VFD), and 68 to 70 (SVI) each bind 5-amino-6-(D-ribitylamino)uracil. 73–74 (DT) serves as a coordination point for (2S)-2-hydroxy-3-oxobutyl phosphate. His-76 acts as the Proton donor in catalysis. Position 101 (Leu-101) interacts with 5-amino-6-(D-ribitylamino)uracil. Residue Arg-116 participates in (2S)-2-hydroxy-3-oxobutyl phosphate binding.

The protein belongs to the DMRL synthase family.

The catalysed reaction is (2S)-2-hydroxy-3-oxobutyl phosphate + 5-amino-6-(D-ribitylamino)uracil = 6,7-dimethyl-8-(1-D-ribityl)lumazine + phosphate + 2 H2O + H(+). It functions in the pathway cofactor biosynthesis; riboflavin biosynthesis; riboflavin from 2-hydroxy-3-oxobutyl phosphate and 5-amino-6-(D-ribitylamino)uracil: step 1/2. Functionally, catalyzes the formation of 6,7-dimethyl-8-ribityllumazine by condensation of 5-amino-6-(D-ribitylamino)uracil with 3,4-dihydroxy-2-butanone 4-phosphate. This is the penultimate step in the biosynthesis of riboflavin. This Methanosarcina barkeri (strain Fusaro / DSM 804) protein is 6,7-dimethyl-8-ribityllumazine synthase.